The following is a 115-amino-acid chain: Nucleoid-associated protein Ava_2322 (115 aa).

Belongs to the YbaB/EbfC family. In terms of assembly, homodimer.

The protein localises to the cytoplasm. The protein resides in the nucleoid. Binds to DNA and alters its conformation. May be involved in regulation of gene expression, nucleoid organization and DNA protection. The chain is Nucleoid-associated protein Ava_2322 from Trichormus variabilis (strain ATCC 29413 / PCC 7937) (Anabaena variabilis).